The sequence spans 158 residues: Ethylene-responsive transcription factor ERF120 (158 aa).

Positions 86 to 147 (KHKGVRKKPS…SARRGTKNGE (62 aa)) form a DNA-binding region, AP2/ERF. The disordered stretch occupies residues 134–158 (VGRRSARRGTKNGEEASTKKTTEKN). Residues 144-158 (KNGEEASTKKTTEKN) are compositionally biased toward basic and acidic residues.

It belongs to the AP2/ERF transcription factor family. ERF subfamily.

It is found in the nucleus. Its function is as follows. Probably acts as a transcriptional activator. Binds to the GCC-box pathogenesis-related promoter element. May be involved in the regulation of gene expression by stress factors and by components of stress signal transduction pathways. The chain is Ethylene-responsive transcription factor ERF120 (ERF120) from Arabidopsis thaliana (Mouse-ear cress).